The chain runs to 347 residues: NADH-ubiquinone oxidoreductase chain 2 (347 aa).

11 helical membrane-spanning segments follow: residues 3-23, 25-45, 59-79, 96-116, 122-142, 149-169, 178-198, 200-220, 237-257, 274-294, and 325-345; these read PVVLTMILLTIMLGTVIVMTT, HWLLVWIGFEMNMLAIIPILM, YFLTQATASMLLMLAIVINLI, IIMTLALAMKLGLAPFHFWVP, IQLSSGLILLTWQKLAPMSIL, INLHLLLLMSLTSILIGGWGG, IMAYSSIAHMGWMTTIMIYNP, MALLNLTIYIILTTTTFMTFM, MPLLTSAVLMTMLSLGGLPPL, NSIIMPTIMAITALLNLFFYM, and LLSPMIILSTLILPLSPMLAL.

Belongs to the complex I subunit 2 family. In terms of assembly, core subunit of respiratory chain NADH dehydrogenase (Complex I) which is composed of 45 different subunits. Interacts with TMEM242.

The protein localises to the mitochondrion inner membrane. It catalyses the reaction a ubiquinone + NADH + 5 H(+)(in) = a ubiquinol + NAD(+) + 4 H(+)(out). Functionally, core subunit of the mitochondrial membrane respiratory chain NADH dehydrogenase (Complex I) which catalyzes electron transfer from NADH through the respiratory chain, using ubiquinone as an electron acceptor. Essential for the catalytic activity and assembly of complex I. The protein is NADH-ubiquinone oxidoreductase chain 2 of Paranyctimene raptor (Unstriped tube-nosed fruit bat).